The following is a 659-amino-acid chain: Putative pentatricopeptide repeat-containing protein At3g16890, mitochondrial (659 aa).

The N-terminal 32 residues, 1-32, are a transit peptide targeting the mitochondrion; the sequence is MRGFASSASRIATAAAASKSLNASTSVNPKLS. PPR repeat units follow at residues 109–143, 144–178, 179–213, 214–248, 249–283, 284–318, 319–353, 354–388, 389–423, 424–458, 459–493, 494–528, 529–563, 564–598, and 599–633; these read DQSL…GYRI, SDEL…GMKP, STRL…GCKP, DRFT…GNRP, NVFT…KLNP, NEAT…DSNL, QRVG…GYIP, DSST…GVKP, GFNG…GLLS, SVYS…GISP, NLVT…GFKP, DVIT…GIEP, NEIT…GLSP, DLYA…GLKP, and DNFT…GCVP.

Belongs to the PPR family. P subfamily.

The protein resides in the mitochondrion. Functionally, required for the ubiquinol-cytochrome c oxidoreductase activity of mitochondrial complex III. The chain is Putative pentatricopeptide repeat-containing protein At3g16890, mitochondrial (PPR40) from Arabidopsis thaliana (Mouse-ear cress).